A 581-amino-acid polypeptide reads, in one-letter code: Threonine--tRNA ligase (581 aa).

Residues 185–478 (DHRKLGKELD…LVEHYGGAFP (294 aa)) are catalytic. Residues Cys278, His329, and His455 each coordinate Zn(2+).

This sequence belongs to the class-II aminoacyl-tRNA synthetase family. Homodimer. The cofactor is Zn(2+).

The protein resides in the cytoplasm. The enzyme catalyses tRNA(Thr) + L-threonine + ATP = L-threonyl-tRNA(Thr) + AMP + diphosphate + H(+). Catalyzes the attachment of threonine to tRNA(Thr) in a two-step reaction: L-threonine is first activated by ATP to form Thr-AMP and then transferred to the acceptor end of tRNA(Thr). Also edits incorrectly charged L-seryl-tRNA(Thr). The polypeptide is Threonine--tRNA ligase (Borreliella burgdorferi (strain ATCC 35210 / DSM 4680 / CIP 102532 / B31) (Borrelia burgdorferi)).